A 489-amino-acid chain; its full sequence is UDP-N-acetylmuramoyl-L-alanyl-D-glutamate--2,6-diaminopimelate ligase (489 aa).

Ser30 is a UDP-N-acetyl-alpha-D-muramoyl-L-alanyl-D-glutamate binding site. 110–116 (GTNGKTT) contacts ATP. UDP-N-acetyl-alpha-D-muramoyl-L-alanyl-D-glutamate is bound by residues 152–153 (TT), Ser179, and Arg187. At Lys219 the chain carries N6-carboxylysine. Residues Arg381, 405-408 (DNPR), Gly458, and Glu462 each bind meso-2,6-diaminopimelate. The Meso-diaminopimelate recognition motif signature appears at 405–408 (DNPR).

This sequence belongs to the MurCDEF family. MurE subfamily. Requires Mg(2+) as cofactor. In terms of processing, carboxylation is probably crucial for Mg(2+) binding and, consequently, for the gamma-phosphate positioning of ATP.

The protein resides in the cytoplasm. It catalyses the reaction UDP-N-acetyl-alpha-D-muramoyl-L-alanyl-D-glutamate + meso-2,6-diaminopimelate + ATP = UDP-N-acetyl-alpha-D-muramoyl-L-alanyl-gamma-D-glutamyl-meso-2,6-diaminopimelate + ADP + phosphate + H(+). The protein operates within cell wall biogenesis; peptidoglycan biosynthesis. Its function is as follows. Catalyzes the addition of meso-diaminopimelic acid to the nucleotide precursor UDP-N-acetylmuramoyl-L-alanyl-D-glutamate (UMAG) in the biosynthesis of bacterial cell-wall peptidoglycan. In Syntrophomonas wolfei subsp. wolfei (strain DSM 2245B / Goettingen), this protein is UDP-N-acetylmuramoyl-L-alanyl-D-glutamate--2,6-diaminopimelate ligase.